Here is a 245-residue protein sequence, read N- to C-terminus: Eukaryotic translation initiation factor 6 (245 aa).

This sequence belongs to the eIF-6 family. Monomer. Associates with the 60S ribosomal subunit.

Its subcellular location is the cytoplasm. The protein localises to the nucleus. The protein resides in the nucleolus. Functionally, binds to the 60S ribosomal subunit and prevents its association with the 40S ribosomal subunit to form the 80S initiation complex in the cytoplasm. May also be involved in ribosome biogenesis. The sequence is that of Eukaryotic translation initiation factor 6 (eif6) from Danio rerio (Zebrafish).